The sequence spans 239 residues: Probable fimbrial chaperone YehC (239 aa).

The N-terminal stretch at 1–31 (MAAIPWRPFNLRGIKMKGLLSLLIFSMVLPA) is a signal peptide.

Belongs to the periplasmic pilus chaperone family.

The protein resides in the periplasm. In terms of biological role, part of the yehABCD fimbrial operon. Could contribute to adhesion to various surfaces in specific environmental niches. The chain is Probable fimbrial chaperone YehC (yehC) from Escherichia coli (strain K12).